The chain runs to 214 residues: Pyridoxine/pyridoxamine 5'-phosphate oxidase (214 aa).

Residues 8–11 and Lys-67 each bind substrate; that span reads RKSY. FMN contacts are provided by residues 62-67, 77-78, Lys-84, and Gln-106; these read RVVLLK and YT. 3 residues coordinate substrate: Tyr-124, Arg-128, and Ser-132. FMN-binding positions include 141–142 and Trp-186; that span reads QS. A substrate-binding site is contributed by 192–194; it reads RLH. Arg-196 contacts FMN.

Belongs to the pyridoxamine 5'-phosphate oxidase family. As to quaternary structure, homodimer. Requires FMN as cofactor.

It catalyses the reaction pyridoxamine 5'-phosphate + O2 + H2O = pyridoxal 5'-phosphate + H2O2 + NH4(+). The catalysed reaction is pyridoxine 5'-phosphate + O2 = pyridoxal 5'-phosphate + H2O2. The protein operates within cofactor metabolism; pyridoxal 5'-phosphate salvage; pyridoxal 5'-phosphate from pyridoxamine 5'-phosphate: step 1/1. It functions in the pathway cofactor metabolism; pyridoxal 5'-phosphate salvage; pyridoxal 5'-phosphate from pyridoxine 5'-phosphate: step 1/1. Its function is as follows. Catalyzes the oxidation of either pyridoxine 5'-phosphate (PNP) or pyridoxamine 5'-phosphate (PMP) into pyridoxal 5'-phosphate (PLP). The polypeptide is Pyridoxine/pyridoxamine 5'-phosphate oxidase (Flavobacterium psychrophilum (strain ATCC 49511 / DSM 21280 / CIP 103535 / JIP02/86)).